Reading from the N-terminus, the 284-residue chain is Bifunctional protein FolD (284 aa).

Residues 165–167, Ser-190, and Ile-231 each bind NADP(+); that span reads GRS.

The protein belongs to the tetrahydrofolate dehydrogenase/cyclohydrolase family. As to quaternary structure, homodimer.

It catalyses the reaction (6R)-5,10-methylene-5,6,7,8-tetrahydrofolate + NADP(+) = (6R)-5,10-methenyltetrahydrofolate + NADPH. The catalysed reaction is (6R)-5,10-methenyltetrahydrofolate + H2O = (6R)-10-formyltetrahydrofolate + H(+). Its pathway is one-carbon metabolism; tetrahydrofolate interconversion. Its function is as follows. Catalyzes the oxidation of 5,10-methylenetetrahydrofolate to 5,10-methenyltetrahydrofolate and then the hydrolysis of 5,10-methenyltetrahydrofolate to 10-formyltetrahydrofolate. This Streptococcus thermophilus (strain ATCC BAA-250 / LMG 18311) protein is Bifunctional protein FolD.